An 88-amino-acid polypeptide reads, in one-letter code: GGDLEIGADVFTGNCAACHAGGANSVEPLKTLNKEDVTKYLDGGLSIEAITSQVRNGKGAMPAWSDRLDDEEIDGVVAYVFKNINEGW.

4 residues coordinate heme c: Cys-15, Cys-18, His-19, and Met-61.

The protein belongs to the cytochrome c family. PetJ subfamily. In terms of assembly, monomer. Post-translationally, binds 1 heme c group covalently per subunit.

It localises to the plastid. It is found in the chloroplast thylakoid lumen. In terms of biological role, functions as an electron carrier between membrane-bound cytochrome b6-f and photosystem I in oxygenic photosynthesis. The polypeptide is Cytochrome c6 (petJ) (Bryopsis maxima (Green alga)).